Consider the following 267-residue polypeptide: Large ribosomal subunit protein uL3 (267 aa).

The tract at residues 124 to 147 is disordered; the sequence is NQHIGPKSHGGGGGSQPVRQTGSL.

The protein belongs to the universal ribosomal protein uL3 family. Part of the 50S ribosomal subunit. Forms a cluster with proteins L14 and L19.

Functionally, one of the primary rRNA binding proteins, it binds directly near the 3'-end of the 23S rRNA, where it nucleates assembly of the 50S subunit. The sequence is that of Large ribosomal subunit protein uL3 from Mycoplasmopsis agalactiae (strain NCTC 10123 / CIP 59.7 / PG2) (Mycoplasma agalactiae).